Here is a 604-residue protein sequence, read N- to C-terminus: Terpenoid synthase 30 (604 aa).

The Mg(2+) site is built by Asn-356, Asp-360, Asn-500, Thr-504, and Glu-508. The DDXXD motif; degenerate signature appears at 356–360 (NDVCD).

Belongs to the terpene synthase family. Tpsa subfamily. Mg(2+) is required as a cofactor. It depends on Mn(2+) as a cofactor.

It is found in the cytoplasm. It participates in secondary metabolite biosynthesis; terpenoid biosynthesis. Its function is as follows. Involved in terpene biosynthesis in roots. Possesses sesquiterpene (C15) synthase activity and diterpene (C20) synthase activity in vitro. The protein is Terpenoid synthase 30 of Arabidopsis thaliana (Mouse-ear cress).